A 141-amino-acid chain; its full sequence is LOB domain-containing protein 34 (141 aa).

The region spanning 16-119 is the LOB domain; the sequence is NQCAACRHQR…SPLNYVAPVI (104 aa).

This sequence belongs to the LOB domain-containing protein family.

This is LOB domain-containing protein 34 (LBD34) from Arabidopsis thaliana (Mouse-ear cress).